Reading from the N-terminus, the 187-residue chain is CASP-like protein 2 (187 aa).

At 1 to 24 the chain is on the cytoplasmic side; the sequence is MKVSAVETGEISQVSAPRKGMIRG. Residues 25–45 form a helical membrane-spanning segment; the sequence is LSIMDFILRIVAAIGTLGSAL. Topologically, residues 46 to 72 are extracellular; the sequence is STGTTRETLPFTTQFVKFRAVFDDLPT. Residues 73 to 93 form a helical membrane-spanning segment; that stretch reads FVFFVTSNSIVCGYLVLSLAL. Residues 94–108 lie on the Cytoplasmic side of the membrane; the sequence is SFFHIIRRSSAAKSR. Residues 109 to 129 form a helical membrane-spanning segment; it reads ILLVFLDTVMFGLLTTGAAAA. The Extracellular portion of the chain corresponds to 130–163; the sequence is GTIVYVSHYGNVNANWFPFCGQYNHFCERISGSL. The chain crosses the membrane as a helical span at residues 164–184; the sequence is IGSFIAVVIFMIIILMSAVSI. Topologically, residues 185–187 are cytoplasmic; that stretch reads SKH.

Belongs to the Casparian strip membrane proteins (CASP) family. In terms of assembly, homodimer and heterodimers.

Its subcellular location is the cell membrane. This is CASP-like protein 2 from Lotus japonicus (Lotus corniculatus var. japonicus).